The chain runs to 29 residues: Glucagon (29 aa).

Belongs to the glucagon family.

It localises to the secreted. In terms of biological role, glucagon plays a key role in glucose metabolism and homeostasis. Regulates blood glucose by increasing gluconeogenesis and decreasing glycolysis. This Callorhinchus milii (Ghost shark) protein is Glucagon (gcg).